The primary structure comprises 377 residues: tRNA-specific 2-thiouridylase MnmA (377 aa).

ATP is bound by residues 22 to 29 (GMSGGVDS) and M48. Positions 108-110 (NPD) are interaction with target base in tRNA. C113 (nucleophile) is an active-site residue. An intrachain disulfide couples C113 to C210. G138 contributes to the ATP binding site. The interval 160 to 162 (KDQ) is interaction with tRNA. C210 functions as the Cysteine persulfide intermediate in the catalytic mechanism. Positions 322–323 (RY) are interaction with tRNA.

It belongs to the MnmA/TRMU family.

It is found in the cytoplasm. The enzyme catalyses S-sulfanyl-L-cysteinyl-[protein] + uridine(34) in tRNA + AH2 + ATP = 2-thiouridine(34) in tRNA + L-cysteinyl-[protein] + A + AMP + diphosphate + H(+). In terms of biological role, catalyzes the 2-thiolation of uridine at the wobble position (U34) of tRNA, leading to the formation of s(2)U34. The chain is tRNA-specific 2-thiouridylase MnmA from Shewanella amazonensis (strain ATCC BAA-1098 / SB2B).